Reading from the N-terminus, the 292-residue chain is Protein PHR1-LIKE 3 (292 aa).

An HTH myb-type domain is found at 34–94 (TDPKPRLRWT…HLQKFRLGRQ (61 aa)). Residues 65 to 90 (PKTIMRTMGVKGLTLYHLKSHLQKFR) constitute a DNA-binding region (H-T-H motif). The stretch at 137–157 (TEALRAQMEVQRRLHEQLEVQ) forms a coiled coil. The LHEQLE motif lies at 150 to 155 (LHEQLE).

It belongs to the MYB-CC family. In terms of assembly, homo- and heterodimers. Interacts with PHL2, but not with PHR1.

The protein resides in the nucleus. Transcriptional activator. Probable component of the central regulatory system controlling transcriptional responses to Pi starvation. Binds in a sequence-specific manner to phosphate starvation-regulated promoters. Required for female gametophyte development and function. This Arabidopsis thaliana (Mouse-ear cress) protein is Protein PHR1-LIKE 3.